A 417-amino-acid polypeptide reads, in one-letter code: NADH-quinone oxidoreductase subunit D (417 aa).

It belongs to the complex I 49 kDa subunit family. NDH-1 is composed of 14 different subunits. Subunits NuoB, C, D, E, F, and G constitute the peripheral sector of the complex.

Its subcellular location is the cell inner membrane. It catalyses the reaction a quinone + NADH + 5 H(+)(in) = a quinol + NAD(+) + 4 H(+)(out). In terms of biological role, NDH-1 shuttles electrons from NADH, via FMN and iron-sulfur (Fe-S) centers, to quinones in the respiratory chain. The immediate electron acceptor for the enzyme in this species is believed to be ubiquinone. Couples the redox reaction to proton translocation (for every two electrons transferred, four hydrogen ions are translocated across the cytoplasmic membrane), and thus conserves the redox energy in a proton gradient. The polypeptide is NADH-quinone oxidoreductase subunit D (Dechloromonas aromatica (strain RCB)).